The following is a 226-amino-acid chain: Ras-related protein RABA4a (226 aa).

Thr2 is subject to N-acetylthreonine. 24 to 31 provides a ligand contact to GTP; the sequence is GDSAVGKS. Positions 46 to 54 match the Effector region motif; sequence SKATIGVEF. GTP is bound by residues 72–76, 130–133, and 160–161; these read DTAGQ, NKSD, and SA. The tract at residues 189 to 226 is disordered; sequence ASEDQENGNPGSLAGKKIDIVPGPGQVIPNKSNMCCNS. A compositionally biased stretch (polar residues) spans 217–226; that stretch reads PNKSNMCCNS. 2 S-geranylgeranyl cysteine lipidation sites follow: Cys223 and Cys224.

This sequence belongs to the small GTPase superfamily. Rab family. As to quaternary structure, interacts with TCTP1.

It localises to the cell membrane. Functionally, intracellular vesicle trafficking and protein transport. This Arabidopsis thaliana (Mouse-ear cress) protein is Ras-related protein RABA4a.